A 426-amino-acid polypeptide reads, in one-letter code: Cuticle-degrading serine protease (426 aa).

The first 21 residues, 1 to 21 (MLTNGLISLLAIAGLATNAFA), serve as a signal peptide directing secretion. Positions 22-123 (GPIRKVSNAG…VEQDTVVTTY (102 aa)) are excised as a propeptide. In terms of domain architecture, Inhibitor I9 spans 39–122 (KYIVVLKKGL…YVEQDTVVTT (84 aa)). In terms of domain architecture, Peptidase S8 spans 130–426 (TWGLDRISHE…TNHQVTIVAS (297 aa)). Aspartate 164 serves as the catalytic Charge relay system. N-linked (GlcNAc...) asparagine glycosylation is present at asparagine 178. Histidine 200 functions as the Charge relay system in the catalytic mechanism. A glycan (N-linked (GlcNAc...) asparagine) is linked at asparagine 252. Residue serine 353 is the Charge relay system of the active site.

This sequence belongs to the peptidase S8 family.

The protein localises to the secreted. With respect to regulation, inhibited by PMSF, SSI, the peptide Phe-Val and by Phe, but not by EDTA. In terms of biological role, hydrolyzes gelatin, casein, the chromogenic substrate azocoll and the cuticle of the nematode P.redivivus. Immobilizes P.redivivus. This is Cuticle-degrading serine protease from Orbilia oligospora (Nematode-trapping fungus).